Reading from the N-terminus, the 335-residue chain is Large ribosomal subunit protein uL3 (335 aa).

Residues 1 to 20 form a disordered region; the sequence is MATIHRPRRGSLAFSPRKRA.

It belongs to the universal ribosomal protein uL3 family. Part of the 50S ribosomal subunit. Forms a cluster with proteins L14 and L24e.

Its function is as follows. One of the primary rRNA binding proteins, it binds directly near the 3'-end of the 23S rRNA, where it nucleates assembly of the 50S subunit. The polypeptide is Large ribosomal subunit protein uL3 (rpl3) (Methanothrix harundinacea (strain 6Ac) (Methanosaeta harundinacea)).